The chain runs to 281 residues: Trypsin zeta (281 aa).

The N-terminal stretch at 1–23 is a signal peptide; that stretch reads MSSSSWLGCLLAVLLSALALSQG. Positions 24–39 are cleaved as a propeptide — activation peptide; that stretch reads LPLLEDLDENSFPDGR. One can recognise a Peptidase S1 domain in the interval 40 to 279; sequence IVGGYVTDIA…LRPWIDAVRA (240 aa). The cysteines at positions 73 and 89 are disulfide-linked. Catalysis depends on charge relay system residues H88 and D135. Disulfide bonds link C199–C219 and C231–C255. The Charge relay system role is filled by S235.

The protein belongs to the peptidase S1 family.

Its subcellular location is the secreted. The protein localises to the extracellular space. It catalyses the reaction Preferential cleavage: Arg-|-Xaa, Lys-|-Xaa.. The polypeptide is Trypsin zeta (zetaTry) (Drosophila erecta (Fruit fly)).